We begin with the raw amino-acid sequence, 146 residues long: Ribosome-binding factor A (146 aa).

Positions 122 to 146 (QQQFGSVDDVTENDIDEADDTEGKA) are disordered. Residues 130–146 (DVTENDIDEADDTEGKA) show a composition bias toward acidic residues.

This sequence belongs to the RbfA family. As to quaternary structure, monomer. Binds 30S ribosomal subunits, but not 50S ribosomal subunits or 70S ribosomes.

It is found in the cytoplasm. In terms of biological role, one of several proteins that assist in the late maturation steps of the functional core of the 30S ribosomal subunit. Associates with free 30S ribosomal subunits (but not with 30S subunits that are part of 70S ribosomes or polysomes). Required for efficient processing of 16S rRNA. May interact with the 5'-terminal helix region of 16S rRNA. This Shewanella sp. (strain MR-7) protein is Ribosome-binding factor A.